A 156-amino-acid polypeptide reads, in one-letter code: 6,7-dimethyl-8-ribityllumazine synthase (156 aa).

5-amino-6-(D-ribitylamino)uracil is bound by residues Phe-23, 57–59 (AFE), and 81–83 (AVI). 86 to 87 (ST) serves as a coordination point for (2S)-2-hydroxy-3-oxobutyl phosphate. His-89 acts as the Proton donor in catalysis. Residue Phe-114 participates in 5-amino-6-(D-ribitylamino)uracil binding. (2S)-2-hydroxy-3-oxobutyl phosphate is bound at residue Arg-128.

Belongs to the DMRL synthase family.

It catalyses the reaction (2S)-2-hydroxy-3-oxobutyl phosphate + 5-amino-6-(D-ribitylamino)uracil = 6,7-dimethyl-8-(1-D-ribityl)lumazine + phosphate + 2 H2O + H(+). Its pathway is cofactor biosynthesis; riboflavin biosynthesis; riboflavin from 2-hydroxy-3-oxobutyl phosphate and 5-amino-6-(D-ribitylamino)uracil: step 1/2. Functionally, catalyzes the formation of 6,7-dimethyl-8-ribityllumazine by condensation of 5-amino-6-(D-ribitylamino)uracil with 3,4-dihydroxy-2-butanone 4-phosphate. This is the penultimate step in the biosynthesis of riboflavin. This chain is 6,7-dimethyl-8-ribityllumazine synthase, found in Campylobacter fetus subsp. fetus (strain 82-40).